Reading from the N-terminus, the 363-residue chain is S-adenosylmethionine:tRNA ribosyltransferase-isomerase (363 aa).

This sequence belongs to the QueA family. Monomer.

It localises to the cytoplasm. The enzyme catalyses 7-aminomethyl-7-carbaguanosine(34) in tRNA + S-adenosyl-L-methionine = epoxyqueuosine(34) in tRNA + adenine + L-methionine + 2 H(+). It participates in tRNA modification; tRNA-queuosine biosynthesis. Its function is as follows. Transfers and isomerizes the ribose moiety from AdoMet to the 7-aminomethyl group of 7-deazaguanine (preQ1-tRNA) to give epoxyqueuosine (oQ-tRNA). The protein is S-adenosylmethionine:tRNA ribosyltransferase-isomerase of Haemophilus influenzae (strain PittGG).